The chain runs to 462 residues: MSKLWGGRFTKTAEQWVDEFGASIGFDQQLVEEDITGSIAHVTMLAKQHILSEEEAAQIKNGLKTLQKKAAAGELVFSAAQEDIHLNLEKLLIDEIGPVGGKLHTGRSRNDQVATDMHLYLRTQTEEIMEAIRTLQAALVKQAEGHVETLIPGYTHLQRAQPVSFAHHLLAYFWMLERDYGRLQDSLKRVNISPLGAGALAGTTFPIDRAYTAELLHFEGIYENSLDAVSDRDFIVEFLAASATLMMHLSRLCEELILWSAQEFQFIEIDDAFATGSSIMPQKKNPDMAELIRGKTGRVYGSLFSLLTTLKGLPLAYNKDMQEDKEGMFDTVKTVKGSLRIFAGMIETITVNTDAMAKAVTSDFSNATELADYLATKGMPFREAHEVVGKLVLTAIEKGVYLLDLPIEVYKEASSLFADDIYEVLQPKTVVGRRNSAGGTGFEQVKLALGKANDLLSQSIKG.

Belongs to the lyase 1 family. Argininosuccinate lyase subfamily.

The protein localises to the cytoplasm. The enzyme catalyses 2-(N(omega)-L-arginino)succinate = fumarate + L-arginine. Its pathway is amino-acid biosynthesis; L-arginine biosynthesis; L-arginine from L-ornithine and carbamoyl phosphate: step 3/3. The polypeptide is Argininosuccinate lyase 2 (Shouchella clausii (strain KSM-K16) (Alkalihalobacillus clausii)).